Consider the following 78-residue polypeptide: Large ribosomal subunit protein bL28 (78 aa).

The protein belongs to the bacterial ribosomal protein bL28 family.

In Trichodesmium erythraeum (strain IMS101), this protein is Large ribosomal subunit protein bL28.